Consider the following 707-residue polypeptide: Molybdenum cofactor sulfurase (707 aa).

An N6-(pyridoxal phosphate)lysine modification is found at Lys206. Cys365 is a catalytic residue. One can recognise an MOSC domain in the interval 558 to 705; it reads QWLENALDMT…VEAGSAVRFF (148 aa).

This sequence belongs to the class-V pyridoxal-phosphate-dependent aminotransferase family. MOCOS subfamily. It depends on pyridoxal 5'-phosphate as a cofactor.

It catalyses the reaction Mo-molybdopterin + L-cysteine + AH2 = thio-Mo-molybdopterin + L-alanine + A + H2O. It functions in the pathway cofactor biosynthesis; molybdopterin biosynthesis. Its function is as follows. Sulfurates the molybdenum cofactor. Sulfation of molybdenum is essential for xanthine dehydrogenase (XDH) and aldehyde oxidase (ADO) enzymes in which molybdenum cofactor is liganded by 1 oxygen and 1 sulfur atom in active form. This Caenorhabditis briggsae protein is Molybdenum cofactor sulfurase (mocs-1).